The following is a 75-amino-acid chain: Small ribosomal subunit protein bS21 (75 aa).

This sequence belongs to the bacterial ribosomal protein bS21 family.

The chain is Small ribosomal subunit protein bS21 from Brucella abortus (strain S19).